Here is a 161-residue protein sequence, read N- to C-terminus: Allophycocyanin alpha chain (161 aa).

N4-methylasparagine is present on Asn-71. Cys-81 is a binding site for (2R,3E)-phycocyanobilin.

Belongs to the phycobiliprotein family. Heterodimer of an alpha and a beta chain. In terms of processing, contains one covalently linked phycocyanobilin chromophore.

It is found in the plastid. Its subcellular location is the chloroplast thylakoid membrane. In terms of biological role, light-harvesting photosynthetic bile pigment-protein from the phycobiliprotein complex. Allophycocyanin has a maximum absorption at approximately 650 nanometers. In Porphyra purpurea (Red seaweed), this protein is Allophycocyanin alpha chain (apcA).